The following is a 1217-amino-acid chain: Genetic suppressor element 1 (1217 aa).

The interval 1–155 (MKGMSHEPKS…SRSSSGGRER (155 aa)) is disordered. S10 is subject to Phosphoserine. Positions 15–33 (MLSTATRTTATVNPLTPSP) are enriched in polar residues. 2 stretches are compositionally biased toward low complexity: residues 43–63 (SPATSSALSAQAAPSSSFAAA) and 76–89 (GSSLSSESSPVSSP). 2 positions are modified to phosphoserine: S84 and S95. Positions 103-114 (VPMGPIIVPPGG) are enriched in low complexity. R305 bears the Asymmetric dimethylarginine mark. Residues 321-403 (ERMSGLSAER…REKELLAAKA (83 aa)) adopt a coiled-coil conformation. Disordered stretches follow at residues 324–385 (SGLS…EREL) and 418–465 (RGHA…HHTV). Residues 331 to 385 (LQMDEELRREREREREREREREADREREKEREREREKEREQEKEREREKEREREL) are compositionally biased toward basic and acidic residues. T433 bears the Phosphothreonine mark. Low complexity predominate over residues 450-465 (PVQHPLHPVPTPHHTV). K496 bears the N6-acetyllysine mark. Disordered stretches follow at residues 526–579 (HLDM…QLHA), 633–675 (KAEE…GPFL), and 699–720 (FGELSGPLKPGSPYRPPVPRAP). 2 stretches are compositionally biased toward basic and acidic residues: residues 551-561 (NRHEPGGRDPP) and 633-645 (KAEEGPRKREPAP). The span at 711 to 720 (PYRPPVPRAP) shows a compositional bias: pro residues. N6-acetyllysine is present on K739. S766 carries the phosphoserine modification. Disordered stretches follow at residues 807–858 (KEEL…NNSP), 903–930 (ADSLTNSPRDSPAVSLSEPATQQASLDV), 948–981 (EPGKLEQVRPQELSRVQELAPASGEKARLSEAPG), and 1068–1122 (LQSS…PKRK). A compositionally biased stretch (basic residues) spans 813–822 (QKRRKRRRML). 2 positions are modified to phosphoserine: S826 and S828. Polar residues-rich tracts occupy residues 831–840 (TIQSKRQTPS) and 847–858 (TRYSPDEMNNSP). A Phosphoserine modification is found at S857. Phosphothreonine is present on T907. The residue at position 909 (S909) is a Phosphoserine. The span at 1068-1085 (LQSSSRAPPPQHNGQQEP) shows a compositional bias: polar residues. Residues 1099–1117 (RDSEEEEEEDDEDGEDEEE) show a composition bias toward acidic residues. S1101 bears the Phosphoserine mark. Residues 1127 to 1201 (EAVFEAYQEH…ELDHLRKCLA (75 aa)) are a coiled coil.

May be a component of a BHC histone deacetylase complex that contains HDAC1, HDAC2, HMG20B/BRAF35, KDM1A, RCOR1/CoREST, PHF21A/BHC80, ZMYM2, ZNF217, ZMYM3, GSE1 and GTF2I.

The sequence is that of Genetic suppressor element 1 (GSE1) from Homo sapiens (Human).